A 2678-amino-acid chain; its full sequence is Mediator of RNA polymerase II transcription subunit 13 (2678 aa).

12 disordered regions span residues 1 to 52, 140 to 285, 495 to 524, 553 to 615, 852 to 993, 1070 to 1253, 1278 to 1394, 1462 to 1502, 1806 to 1838, 2075 to 2105, 2225 to 2307, and 2656 to 2678; these read MMGT…GYNS, SKKP…QPIS, NSNNIINNNNNSNINNNINNNNNQQQQQQQ, QQQQ…NNNI, SPSS…QQQQ, TSHY…KPFL, LPHN…QDES, SPFS…NNHH, FSGSSGLNNSNDRNSMIPMDNSDDTSDLMSMDD, QNQNQNQNSNSNESQQQQQQQSNNKQKQTQT, SSSS…QEQK, and KLTPNSKQSPSPINSPHLNSNNT. 3 stretches are compositionally biased toward low complexity: residues 15 to 48, 144 to 162, and 169 to 186; these read SGSNAGGNVNNNNNGPNINNPNNPNNTNSLPTTS, INNSSNNSNITSSTSTDSS, and NSPSETTPPNTTNNNSNN. Polar residues predominate over residues 187-206; that stretch reads VTKDSPPNATNKMSTSPKSL. The segment covering 207–276 has biased composition (low complexity); sequence SPTISNNNNN…SPPTVASVTS (70 aa). 2 stretches are compositionally biased toward low complexity: residues 553-573 and 587-615; these read QQQQTINNNSNNISSNNDNNN and SSSSSSTPSQVTMQTTPTQEFSNNNNNNI. Positions 855–872 are enriched in polar residues; that stretch reads SPLTQHPSSPHSPFNNVN. A compositionally biased stretch (basic residues) spans 901–916; that stretch reads KKRHGKSQKKGRSSKR. Positions 922 to 950 are enriched in low complexity; it reads SNNNNNNNTTTTSTITATTTTTTPTAATT. 2 stretches are compositionally biased toward polar residues: residues 966 to 979 and 1079 to 1090; these read NIQETSQPQSLTTV and PTQNGSQKNNQR. The segment covering 1109–1150 has biased composition (low complexity); that stretch reads TTTTTTTTTTTPTPNPTTTTTQPQTQPQQQSQQQQQPQQTNP. Residues 1151–1195 are compositionally biased toward polar residues; that stretch reads ILPTNSNLITNQKPQQYQPPLQDPFQSIDSQQPKSIQSPTLTNQP. A compositionally biased stretch (low complexity) spans 1201 to 1211; that stretch reads PTLTNQPLQQY. Over residues 1281 to 1306 the composition is skewed to polar residues; that stretch reads NTEQSPSNDDLSNPNHLHHGTPTSAI. Residues 1312 to 1321 are compositionally biased toward low complexity; that stretch reads SSSSSGNNMI. The span at 1322-1343 shows a compositional bias: gly residues; the sequence is GSGGIVGSGGGNTNVSGSGGGM. Residues 1359–1371 show a composition bias toward basic residues; that stretch reads PHHHHHHHHHHHP. Residues 1475–1497 show a composition bias toward low complexity; the sequence is TTTNNNNNHNNNNNNNHPNNHHQ. Over residues 1806 to 1819 the composition is skewed to polar residues; sequence FSGSSGLNNSNDRN. Residues 2658–2678 are compositionally biased toward polar residues; that stretch reads TPNSKQSPSPINSPHLNSNNT.

Belongs to the Mediator complex subunit 13 family. Component of the Mediator complex.

The protein localises to the nucleus. In terms of biological role, component of the Mediator complex, a coactivator involved in the regulated transcription of nearly all RNA polymerase II-dependent genes. Mediator functions as a bridge to convey information from gene-specific regulatory proteins to the basal RNA polymerase II transcription machinery. Mediator is recruited to promoters by direct interactions with regulatory proteins and serves as a scaffold for the assembly of a functional preinitiation complex with RNA polymerase II and the general transcription factors. Required for the starvation-induced activation of the ACA (adenylyl cyclase) expression pathway at the growth/differentiation transition. The polypeptide is Mediator of RNA polymerase II transcription subunit 13 (amiB) (Dictyostelium discoideum (Social amoeba)).